A 187-amino-acid polypeptide reads, in one-letter code: Peptide deformylase (187 aa).

Fe cation contacts are provided by Cys94 and His136. Glu137 is an active-site residue. Fe cation is bound at residue His140.

It belongs to the polypeptide deformylase family. Fe(2+) serves as cofactor.

It catalyses the reaction N-terminal N-formyl-L-methionyl-[peptide] + H2O = N-terminal L-methionyl-[peptide] + formate. In terms of biological role, removes the formyl group from the N-terminal Met of newly synthesized proteins. Requires at least a dipeptide for an efficient rate of reaction. N-terminal L-methionine is a prerequisite for activity but the enzyme has broad specificity at other positions. This is Peptide deformylase from Chlorobaculum parvum (strain DSM 263 / NCIMB 8327) (Chlorobium vibrioforme subsp. thiosulfatophilum).